The primary structure comprises 1165 residues: Disease resistance protein RPS4B (1165 aa).

The 163-residue stretch at 12–174 (PQHQVFINFR…EIVKEVKKVL (163 aa)) folds into the TIR domain. Glutamate 86 is an active-site residue. The NB-ARC domain occupies 211 to 474 (KQRLKELEEK…FLDIACFRSQ (264 aa)). The LRR 1 repeat unit spans residues 592-613 (SHCPHECLTNNKINMPDGLELP). The LRR 2; degenerate repeat unit spans residues 614–635 (LKEVRCLHWLKFPLEELPNDFD). LRR repeat units lie at residues 636–659 (PINLVDLKLPYSEIERLWDGVKDT), 684–703 (NLQRLNLEGCTSLESLRDVN), 704–725 (LTSLKTLTLSNCSNFKEFPLIP), 726–748 (ENLKALYLDGTSISQLPDNVGNL), 772–794 (LKTLQKLVLSGCSKLKEFPEINK), and 795–818 (SSLKILLLDGTSIKTMPQLPSVQY). Residues 819–836 (LCLSRNDHLIYLPAGINQ) form an LRR 9; degenerate repeat. An LRR 10 repeat occupies 837–863 (VSQLTRLDLKYCTKLTYVPELPPTLQY).

This sequence belongs to the disease resistance TIR-NB-LRR family. Interacts with RRS1B. RPS4B-RRS1B heterodimer interacts with the bacterial effectors AvrRps4 and PopP2.

It localises to the nucleus. It carries out the reaction NAD(+) + H2O = ADP-D-ribose + nicotinamide + H(+). Disease resistance (R) protein that specifically recognizes the AvrRps4 type III effector avirulence protein from P.syringae. Heterodimerization with RRS1B is required to form a functional complex to recognize AvrRps4 and to mediate the hypersensitive response. This is Disease resistance protein RPS4B from Arabidopsis thaliana (Mouse-ear cress).